The chain runs to 1113 residues: MFSQVPRTPAAGCYYLNPLTPESQEMYLRFDQTARRSPYRMSRILARHHLVTKIQQEIEAKEACDWLRAAGFPQYAQLYEDSQFPINIAAVKKDHDFLERDLVEPLCRRLNTLNKCASMRLDVNFQRKKGDDSDEEDLCISNKWTFQRTSRRWSRVDDLHTLFPVADRNGSPGGPRMRNTASSESVLTDLSEPEVCSIHSESSGGSDSRSQSGHHSADSTHALEATLVSSSLPQSTREGLNQSFHPKNEKPTRTRAKSFLKRMDTLRVKGALGRHKGPGRTGGLVISRPVLQQEPESFKTMQCVQIPNGDLQTSPPAACRKGLPCSSKSSGESSPLENSSTVSTPCMKERKCHHEANKRGGMYLEDLDVLAGTALPDTSDQNHMHGFHSQENLVVHIPKDHKPGTFPKALSIESLSPTDNSNGVNWRTGSISLGRQQGPGMREPRLMSSCHRASRVSIYDNVPSSHLYASTGDLLDLEKDGLLPQLDDILQHVNGIQEVVDDWSKNILPELQSHSTLAGDPGLSPFPSPNQVTLDFEGNSVSEGRTTPSDVERDRTSLNESEATGVRERRDSGVGASLTRPNRRLRWSSFQLSHQPQPSPATPHISSQTAAQLNLLQRFSLLRLTAIMEKYSMSNKHGWTWSVPKFMKRIKAPDYRDKAVFGVPLIVHVQRTGQPLPQSIQQALRYLRSNCLDQVGLFRKSGVKSRIHALRQMNENFPDNVSYEDQSAYDVADMVKQFFRDLPEPLFTNKLSETFLHIYQYVPKEQRLQAVQAAILLLADENREALQTLLCFLHDVVNLVDENQMTPMNLAVCLAPSLFHLNLLKKESSPKVIQKKYATGKPDQKDLNENLAAAQGLAHMITECNRLFEVPHEMVAQSRDSYLEAEIHVPSLEDLGAQLAESGATFHTYLEHLVQGLQKEAKEKFKGWVTCSSPDNTDLAFKKVGDGHPLKLWKASVEVEAPPSVVLNRVLRERHLWDEDFVQWKVVERLDKQTEIYQYVLNSMVPHPSRDFLVLRTWKTDLPKGMCTLVSLSVEYEEAQLMGGVRAVVMDSQYLIEPCGSGKSRLTHICRIDLKGHSPEWYSKGFGHLCAAEVTRIRNSFQPLVAEGPETKI.

M1 carries the post-translational modification N-acetylmethionine. The SAM domain occupies 55-122; sequence QQEIEAKEAC…LNKCASMRLD (68 aa). 3 disordered regions span residues 164 to 218, 230 to 256, and 308 to 343; these read PVAD…HSAD, SSLP…RTRA, and NGDL…STVS. Residues 179-188 show a composition bias toward polar residues; sequence NTASSESVLT. The segment covering 197–214 has biased composition (low complexity); it reads SIHSESSGGSDSRSQSGH. Polar residues predominate over residues 230–245; it reads SSLPQSTREGLNQSFH. Residues 322–340 show a composition bias toward low complexity; the sequence is GLPCSSKSSGESSPLENSS. S411 is modified (phosphoserine). 2 stretches are compositionally biased toward polar residues: residues 421–435 and 529–549; these read SNGV…SLGR and PNQV…TTPS. 2 disordered regions span residues 421-443 and 514-578; these read SNGV…GMRE and HSTL…GASL. Residues 663–868 form the Rho-GAP domain; that stretch reads VPLIVHVQRT…HMITECNRLF (206 aa). An START domain is found at 899 to 1109; sequence LAESGATFHT…SFQPLVAEGP (211 aa).

In terms of assembly, homodimer. Interacts with TAX1BP1.

It localises to the cytoplasm. The protein resides in the membrane. Its subcellular location is the mitochondrion membrane. It is found in the lipid droplet. Its function is as follows. May function as a GTPase-activating protein. The chain is StAR-related lipid transfer protein 13 (Stard13) from Mus musculus (Mouse).